Reading from the N-terminus, the 251-residue chain is UPF0309 protein SGR_3073 (251 aa).

Residues 36 to 221 (VADTVASGGR…EQLVARGIEP (186 aa)) enclose the SIS domain.

This sequence belongs to the UPF0309 family.

The chain is UPF0309 protein SGR_3073 from Streptomyces griseus subsp. griseus (strain JCM 4626 / CBS 651.72 / NBRC 13350 / KCC S-0626 / ISP 5235).